The chain runs to 65 residues: Large ribosomal subunit protein bL35 (65 aa).

Composition is skewed to basic residues over residues 1–16 (MPKM…RFKK) and 31–45 (HRFH…RQLR). The segment at 1 to 47 (MPKMKTHRASAKRFKKTANGGLKSASAYTSHRFHGKTKKQRRQLRGT) is disordered.

The protein belongs to the bacterial ribosomal protein bL35 family.

The chain is Large ribosomal subunit protein bL35 from Leuconostoc citreum (strain KM20).